A 552-amino-acid chain; its full sequence is Alcohol dehydrogenase [acceptor] (552 aa).

3-32 (DYIIVGAGSAGCVLANRLSADPSKRVCLLE) is an FAD binding site. The active-site Proton acceptor is the histidine 469.

Belongs to the GMC oxidoreductase family. The cofactor is FAD.

The protein localises to the cell inner membrane. The enzyme catalyses a primary alcohol + A = an aldehyde + AH2. Functionally, converts aliphatic medium-chain-length alcohols into aldehydes. May be linked to the electron transfer chain. The chain is Alcohol dehydrogenase [acceptor] (alkJ) from Pseudomonas putida (Arthrobacter siderocapsulatus).